A 485-amino-acid chain; its full sequence is Threonine synthase-like 2 (485 aa).

Lys113 is modified (N6-(pyridoxal phosphate)lysine).

The protein belongs to the threonine synthase family. It depends on pyridoxal 5'-phosphate as a cofactor.

In terms of biological role, acts as a catabolic phospho-lyase on both gamma- and beta-phosphorylated substrates. Degrades O-phospho-threonine (PThr) to alpha-ketobutyrate, ammonia and phosphate. The polypeptide is Threonine synthase-like 2 (Thnsl2) (Rattus norvegicus (Rat)).